A 71-amino-acid chain; its full sequence is Conotoxin Bu23 (71 aa).

Positions 1–21 are cleaved as a signal peptide; the sequence is MGMRMMVTVFLLGVLATTVVS. Positions 22–37 are excised as a propeptide; it reads LRSNRASDGRRGIVNK. At N70 the chain carries Asparagine amide.

The protein belongs to the conotoxin A superfamily. Post-translationally, contains 3 disulfide bonds. They are not indicated here, since framework IV presents two different connectivities (I-V, II-III, IV-VI and I-III, II-V, IV-VI). Expressed by the venom duct.

Its subcellular location is the secreted. This chain is Conotoxin Bu23, found in Conus bullatus (Bubble cone).